The sequence spans 72 residues: Mitochondrial import protein 2 (72 aa).

The tract at residues 1–22 is disordered; that stretch reads MAEVLDLEIDPISDGEDDTYSS. Residues 1–34 lie on the Cytoplasmic side of the membrane; that stretch reads MAEVLDLEIDPISDGEDDTYSSELDDDLKDSIEQ. A helical transmembrane segment spans residues 35-52; the sequence is LERVLCLVVFPLLGKFLG. The Mitochondrial intermembrane portion of the chain corresponds to 53–72; sequence RKFAFHAWARWLERRRLVSN.

Belongs to the MIM2 family. In terms of assembly, component of the mitochondrial outer import machinery (MIM) complex containing at least mim1 and mim2. Interacts with mim1. Interacts with mitophagy receptor atg43.

It is found in the mitochondrion outer membrane. Its function is as follows. Component of the mitochondrial outer import machinery (MIM) complex that mediates transport of proteins into mitochondrial compartments. Promotes the insertion of tom70 into the outer mitochondrial membrane. Promotes the insertion of atg43 into the outer mitochondrial membrane. Involved in import of the subset of proteins with multiple alpha-helical transmembrane segments. The polypeptide is Mitochondrial import protein 2 (Schizosaccharomyces pombe (strain 972 / ATCC 24843) (Fission yeast)).